A 227-amino-acid polypeptide reads, in one-letter code: 7-cyano-7-deazaguanine synthase (227 aa).

Position 8 to 18 (8 to 18 (FSGGQDSTTCL)) interacts with ATP. Zn(2+)-binding residues include Cys187, Cys196, Cys199, and Cys202.

The protein belongs to the QueC family. The cofactor is Zn(2+).

It catalyses the reaction 7-carboxy-7-deazaguanine + NH4(+) + ATP = 7-cyano-7-deazaguanine + ADP + phosphate + H2O + H(+). It functions in the pathway purine metabolism; 7-cyano-7-deazaguanine biosynthesis. Functionally, catalyzes the ATP-dependent conversion of 7-carboxy-7-deazaguanine (CDG) to 7-cyano-7-deazaguanine (preQ(0)). The sequence is that of 7-cyano-7-deazaguanine synthase from Aliivibrio fischeri (strain ATCC 700601 / ES114) (Vibrio fischeri).